Consider the following 857-residue polypeptide: Thiamine repressible genes regulatory protein thi5 (857 aa).

The segment at residues cysteine 38–cysteine 64 is a DNA-binding region (zn(2)-C6 fungal-type). Disordered stretches follow at residues alanine 152–serine 175 and glycine 797–glutamine 819. Positions serine 159–serine 175 are enriched in low complexity. Residues proline 803–glutamine 819 show a composition bias toward polar residues.

The protein resides in the nucleus. Its function is as follows. Transcription factor that activates the nmt1 promoter. Regulation of thiamine repressible genes. Negatively regulates conjugation during meiosis, by inducing negative regulators which delay conjugation. Involved in thi1 regulation. The sequence is that of Thiamine repressible genes regulatory protein thi5 (thi5) from Schizosaccharomyces pombe (strain 972 / ATCC 24843) (Fission yeast).